The sequence spans 418 residues: Tyrosine--tRNA ligase (418 aa).

Tyrosine 34 provides a ligand contact to L-tyrosine. The 'HIGH' region motif lies at 39–48 (PTGDSMHIGH). L-tyrosine-binding residues include tyrosine 166 and glutamine 170. The 'KMSKS' region motif lies at 228–232 (KFGKT). Lysine 231 contacts ATP. One can recognise an S4 RNA-binding domain in the interval 350–417 (TNIVELLTET…KKNYFLAKVK (68 aa)).

Belongs to the class-I aminoacyl-tRNA synthetase family. TyrS type 1 subfamily. Homodimer.

The protein localises to the cytoplasm. It catalyses the reaction tRNA(Tyr) + L-tyrosine + ATP = L-tyrosyl-tRNA(Tyr) + AMP + diphosphate + H(+). In terms of biological role, catalyzes the attachment of tyrosine to tRNA(Tyr) in a two-step reaction: tyrosine is first activated by ATP to form Tyr-AMP and then transferred to the acceptor end of tRNA(Tyr). This chain is Tyrosine--tRNA ligase, found in Levilactobacillus brevis (Lactobacillus brevis).